The primary structure comprises 400 residues: PHD finger protein 24 (400 aa).

Residue glycine 2 is the site of N-myristoyl glycine attachment. Positions arginine 29–glycine 38 are enriched in basic and acidic residues. Residues arginine 29–alanine 65 form a disordered region. Arginine 36 carries the post-translational modification Omega-N-methylarginine. Serine 43 bears the Phosphoserine mark. At threonine 47 the chain carries Phosphothreonine. Serine 51 carries the phosphoserine modification. The segment at asparagine 129–asparagine 190 adopts a PHD-type zinc-finger fold. Omega-N-methylarginine is present on arginine 307.

In Mus musculus (Mouse), this protein is PHD finger protein 24.